A 275-amino-acid polypeptide reads, in one-letter code: 3-methyl-2-oxobutanoate hydroxymethyltransferase (275 aa).

Residues D49 and D88 each coordinate Mg(2+). Residues 49-50 (DS), D88, and K118 each bind 3-methyl-2-oxobutanoate. E120 serves as a coordination point for Mg(2+). The Proton acceptor role is filled by E187.

It belongs to the PanB family. In terms of assembly, homodecamer; pentamer of dimers. Requires Mg(2+) as cofactor.

It is found in the cytoplasm. It carries out the reaction 3-methyl-2-oxobutanoate + (6R)-5,10-methylene-5,6,7,8-tetrahydrofolate + H2O = 2-dehydropantoate + (6S)-5,6,7,8-tetrahydrofolate. It functions in the pathway cofactor biosynthesis; (R)-pantothenate biosynthesis; (R)-pantoate from 3-methyl-2-oxobutanoate: step 1/2. Catalyzes the reversible reaction in which hydroxymethyl group from 5,10-methylenetetrahydrofolate is transferred onto alpha-ketoisovalerate to form ketopantoate. This is 3-methyl-2-oxobutanoate hydroxymethyltransferase from Bartonella quintana (strain Toulouse) (Rochalimaea quintana).